The sequence spans 295 residues: Pyridoxal 5'-phosphate synthase subunit PdxS (295 aa).

D-ribose 5-phosphate is bound at residue Asp-25. The Schiff-base intermediate with D-ribose 5-phosphate role is filled by Lys-82. Gly-154 lines the D-ribose 5-phosphate pocket. Arg-166 is a binding site for D-glyceraldehyde 3-phosphate. D-ribose 5-phosphate is bound by residues Gly-215 and 236-237; that span reads GS.

This sequence belongs to the PdxS/SNZ family. As to quaternary structure, in the presence of PdxT, forms a dodecamer of heterodimers.

The catalysed reaction is aldehydo-D-ribose 5-phosphate + D-glyceraldehyde 3-phosphate + L-glutamine = pyridoxal 5'-phosphate + L-glutamate + phosphate + 3 H2O + H(+). The protein operates within cofactor biosynthesis; pyridoxal 5'-phosphate biosynthesis. Its function is as follows. Catalyzes the formation of pyridoxal 5'-phosphate from ribose 5-phosphate (RBP), glyceraldehyde 3-phosphate (G3P) and ammonia. The ammonia is provided by the PdxT subunit. Can also use ribulose 5-phosphate and dihydroxyacetone phosphate as substrates, resulting from enzyme-catalyzed isomerization of RBP and G3P, respectively. The protein is Pyridoxal 5'-phosphate synthase subunit PdxS of Actinobacillus pleuropneumoniae serotype 5b (strain L20).